A 171-amino-acid polypeptide reads, in one-letter code: Peptide deformylase (171 aa).

Residues Cys-91 and His-133 each coordinate Fe cation. The active site involves Glu-134. His-137 contacts Fe cation.

This sequence belongs to the polypeptide deformylase family. Requires Fe(2+) as cofactor.

The catalysed reaction is N-terminal N-formyl-L-methionyl-[peptide] + H2O = N-terminal L-methionyl-[peptide] + formate. In terms of biological role, removes the formyl group from the N-terminal Met of newly synthesized proteins. Requires at least a dipeptide for an efficient rate of reaction. N-terminal L-methionine is a prerequisite for activity but the enzyme has broad specificity at other positions. This Edwardsiella ictaluri (strain 93-146) protein is Peptide deformylase.